Reading from the N-terminus, the 211-residue chain is Protein Nef (211 aa).

Gly2 carries N-myristoyl glycine; by host lipidation. The residue at position 6 (Ser6) is a Phosphoserine; by host. The acidic; interacts with host PACS1 and PACS2; stabilizes the interaction of NEF/MHC-I with host AP1M1; necessary for MHC-I internalization stretch occupies residues 67-70; the sequence is EDEE. The tract at residues 74 to 83 is SH3-binding; interaction with Src family tyrosine kinases; it reads PVRPQVPLRP. The PxxP; stabilizes the interaction of NEF/MHC-I with host AP1M1; necessary for MHC-I internalization motif lies at 77-80; it reads PQVP. The tract at residues 113–129 is mediates dimerization, Nef-PTE1 interaction; it reads DILDLWVYHTQGYFPDW. The tract at residues 153-185 is binding to ATP6V1H; the sequence is MDPDQVEEANEGENNSLLHPISLHGMDDPEKEV. The Dileucine internalization motif; necessary for CD4 internalization motif lies at 169–170; sequence LL. Positions 179-180 match the Diacidic; necessary for CD4 internalization motif; that stretch reads DD.

Belongs to the lentivirus primate group Nef protein family. In terms of assembly, monomer; cytosolic form. Homodimer; membrane bound form. Interacts with Nef associated p21-activated kinase (PAK2); this interaction activates PAK2. Associates with the Nef-MHC-I-AP1 complex; this complex is required for MHC-I internalization. Interacts (via C-terminus) with host PI3-kinase. Interacts with host PACS1; this interaction seems to be weak. Interacts with host PACS2. Interacts with host LCK and MAPK3; these interactions inhibit the kinase activity of the latter. Interacts with host ATP6V1H; this interaction may play a role in CD4 endocytosis. Associates with the CD4-Nef-AP2 complex; this complex is required for CD4 internalization. Interacts with host AP2 subunit alpha and AP2 subunit sigma2. Interacts with TCR-zeta chain; this interaction up-regulates the Fas ligand (FasL) surface expression. Interacts with host HCK, LYN, and SRC; these interactions activate the Src family kinases. Interacts with MAP3K5; this interaction inhibits the Fas and TNFR-mediated death signals. Interacts with beta-COP and PTE1. Interacts with human RACK1; this increases Nef phosphorylation by PKC. Interacts with TP53; this interaction decreases the half-life of TP53, protecting the infected cell against p53-mediated apoptosis. Post-translationally, the virion-associated Nef proteins are cleaved by the viral protease to release the soluble C-terminal core protein. Nef is probably cleaved concomitantly with viral structural proteins on maturation of virus particles. Myristoylated. In terms of processing, phosphorylated on serine residues, probably by host PKCdelta and theta.

It is found in the host cell membrane. The protein localises to the virion. It localises to the secreted. Its subcellular location is the host Golgi apparatus membrane. In terms of biological role, factor of infectivity and pathogenicity, required for optimal virus replication. Alters numerous pathways of T-lymphocyte function and down-regulates immunity surface molecules in order to evade host defense and increase viral infectivity. Alters the functionality of other immunity cells, like dendritic cells, monocytes/macrophages and NK cells. Its function is as follows. In infected CD4(+) T-lymphocytes, down-regulates the surface MHC-I, mature MHC-II, CD4, CD28, CCR5 and CXCR4 molecules. Mediates internalization and degradation of host CD4 through the interaction of with the cytoplasmic tail of CD4, the recruitment of AP-2 (clathrin adapter protein complex 2), internalization through clathrin coated pits, and subsequent transport to endosomes and lysosomes for degradation. Diverts host MHC-I molecules to the trans-Golgi network-associated endosomal compartments by an endocytic pathway to finally target them for degradation. MHC-I down-regulation may involve AP-1 (clathrin adapter protein complex 1) or possibly Src family kinase-ZAP70/Syk-PI3K cascade recruited by PACS2. In consequence infected cells are masked for immune recognition by cytotoxic T-lymphocytes. Decreasing the number of immune receptors also prevents reinfection by more HIV particles (superinfection). Down-regulates host SERINC3 and SERINC5 thereby excluding these proteins from the viral particles. Virion infectivity is drastically higher when SERINC3 or SERINC5 are excluded from the viral envelope, because these host antiviral proteins impair the membrane fusion event necessary for subsequent virion penetration. Bypasses host T-cell signaling by inducing a transcriptional program nearly identical to that of anti-CD3 cell activation. Interaction with TCR-zeta chain up-regulates the Fas ligand (FasL). Increasing surface FasL molecules and decreasing surface MHC-I molecules on infected CD4(+) cells send attacking cytotoxic CD8+ T-lymphocytes into apoptosis. Functionally, plays a role in optimizing the host cell environment for viral replication without causing cell death by apoptosis. Protects the infected cells from apoptosis in order to keep them alive until the next virus generation is ready to strike. Inhibits the Fas and TNFR-mediated death signals by blocking MAP3K5/ASK1. Decreases the half-life of TP53, protecting the infected cell against p53-mediated apoptosis. Inhibits the apoptotic signals regulated by the Bcl-2 family proteins through the formation of a Nef/PI3-kinase/PAK2 complex that leads to activation of PAK2 and induces phosphorylation of host BAD. In terms of biological role, extracellular Nef protein targets CD4(+) T-lymphocytes for apoptosis by interacting with CXCR4 surface receptors. This chain is Protein Nef, found in Homo sapiens (Human).